Consider the following 527-residue polypeptide: Chorismate synthase (527 aa).

Residues His-17, His-104, and Asp-485 contribute to the active site.

The protein belongs to the chorismate synthase family.

Its subcellular location is the cytoplasm. It is found in the cytosol. It carries out the reaction 5-O-(1-carboxyvinyl)-3-phosphoshikimate = chorismate + phosphate. The catalysed reaction is FMNH2 + NADP(+) = FMN + NADPH + 2 H(+). Its pathway is metabolic intermediate biosynthesis; chorismate biosynthesis; chorismate from D-erythrose 4-phosphate and phosphoenolpyruvate: step 7/7. Its function is as follows. Bifunctional chorismate synthase and flavin reductase. Catalyzes the conversion of 5-enolpyruvylshikimate 3-phosphate (EPSP) to form chorismate. Acts also as a flavin reductase (FR) able to generate reduced flavin mononucleotide in the presence of NADPH. In Plasmodium falciparum (isolate 3D7), this protein is Chorismate synthase.